Here is a 655-residue protein sequence, read N- to C-terminus: Chaperone protein DnaK 3 (655 aa).

Threonine 197 carries the phosphothreonine; by autocatalysis modification.

This sequence belongs to the heat shock protein 70 family.

Functionally, acts as a chaperone. This is Chaperone protein DnaK 3 from Synechococcus sp. (strain ATCC 27144 / PCC 6301 / SAUG 1402/1) (Anacystis nidulans).